A 344-amino-acid polypeptide reads, in one-letter code: uncharacterized protein (344 aa).

2 residues coordinate NADP(+): lysine 38 and tyrosine 167.

This sequence belongs to the NAD(P)-dependent epimerase/dehydratase family. Dihydroflavonol-4-reductase subfamily.

This is an uncharacterized protein from Saccharomyces cerevisiae (strain ATCC 204508 / S288c) (Baker's yeast).